Consider the following 403-residue polypeptide: MPIQPFDQREWNEPMHSLRISVGGLPVLASMTKATDPRFRPRWRVILTSFVGAALLWLLYSHHQTPVSGRPPIHNAHNWRLRQERISQYNDTYPLSPPQRTPGGIRYRIAVIADLDTGSKAQEENTWFSYLKKGYLTLSDSGDRVSVEWDKDRGVLESHLAEKGRGMELSDLIVFNGKLYSVDDRTGVIYQIEGTKAVPWVILSDGDGAVEKGFKAEWLAVKDEHLYVGGLGKEWTTTTGEVVNENPEWVKVVGHRGSVEHENWVSSYNALRAAAGIQPPGYLIHESACWSDTLQRWFFLPRRASHERYSEREDERKGSNLLLSAAQDFRDISVRQVGALVPTHGFSSFKFIPNTDDQIIVALKSEEDNGRIATYVMAFTLDGRFLLPETKIGSVKYEGIEFI.

At 1–44 the chain is on the cytoplasmic side; that stretch reads MPIQPFDQREWNEPMHSLRISVGGLPVLASMTKATDPRFRPRWR. A helical; Signal-anchor for type II membrane protein membrane pass occupies residues 45-61; the sequence is VILTSFVGAALLWLLYS. Residues 62–403 lie on the Lumenal side of the membrane; that stretch reads HHQTPVSGRP…SVKYEGIEFI (342 aa). A glycan (N-linked (GlcNAc...) asparagine) is linked at asparagine 90. Residues serine 170, aspartate 171, glutamate 217, glutamate 286, serine 347, and glutamate 398 each coordinate Ca(2+).

It belongs to the apyrase family. Monomer. Homodimer; dimerization is Ca(2+)-dependent. Ca(2+) is required as a cofactor. As to expression, detected in intestine, thymus, heart, lung, spleen, kidney, liver, testis, skeletal muscle and brain.

The protein localises to the endoplasmic reticulum membrane. It is found in the golgi apparatus. It localises to the golgi stack membrane. The enzyme catalyses a ribonucleoside 5'-diphosphate + H2O = a ribonucleoside 5'-phosphate + phosphate + H(+). Its function is as follows. Calcium-dependent nucleotidase with a preference for UDP. The order of activity with different substrates is UDP &gt; GDP &gt; IDP &gt;&gt; UTP &gt; CDP = GTP = ITP. Has very low activity towards ADP and even lower activity towards ATP. Does not hydrolyze AMP and GMP. Involved in proteoglycan synthesis. In Rattus norvegicus (Rat), this protein is Soluble calcium-activated nucleotidase 1 (Cant1).